Consider the following 134-residue polypeptide: Fluoride-specific ion channel FluC (134 aa).

Transmembrane regions (helical) follow at residues 7–27, 38–58, 69–89, and 110–130; these read LAVA…TIMA, GTLL…IVLV, LFLF…AAES, and VGSL…LLGH. The Na(+) site is built by Gly77 and Thr80.

Belongs to the fluoride channel Fluc/FEX (TC 1.A.43) family.

It is found in the cell inner membrane. It carries out the reaction fluoride(in) = fluoride(out). With respect to regulation, na(+) is not transported, but it plays an essential structural role and its presence is essential for fluoride channel function. Fluoride-specific ion channel. Important for reducing fluoride concentration in the cell, thus reducing its toxicity. The chain is Fluoride-specific ion channel FluC from Legionella pneumophila (strain Paris).